The primary structure comprises 453 residues: Glutamyl-tRNA reductase (453 aa).

Residues 50 to 53 (TCNR), S110, 115 to 117 (EPQ), and Q121 each bind substrate. C51 acts as the Nucleophile in catalysis. Residue 190-195 (GAGEMA) coordinates NADP(+). Basic and acidic residues predominate over residues 423 to 436 (REKVPTDAHADRKP). The segment at 423–453 (REKVPTDAHADRKPPNFAETSDDFDVTDASE) is disordered. Residues 442 to 453 (TSDDFDVTDASE) show a composition bias toward acidic residues.

It belongs to the glutamyl-tRNA reductase family. Homodimer.

It carries out the reaction (S)-4-amino-5-oxopentanoate + tRNA(Glu) + NADP(+) = L-glutamyl-tRNA(Glu) + NADPH + H(+). It participates in porphyrin-containing compound metabolism; protoporphyrin-IX biosynthesis; 5-aminolevulinate from L-glutamyl-tRNA(Glu): step 1/2. Its function is as follows. Catalyzes the NADPH-dependent reduction of glutamyl-tRNA(Glu) to glutamate 1-semialdehyde (GSA). This Solidesulfovibrio magneticus (strain ATCC 700980 / DSM 13731 / RS-1) (Desulfovibrio magneticus) protein is Glutamyl-tRNA reductase.